Here is a 379-residue protein sequence, read N- to C-terminus: Cytochrome b (379 aa).

Transmembrane regions (helical) follow at residues 33 to 53 (FGSL…FLAM), 77 to 98 (WLIR…FIHV), 113 to 133 (WNIG…GYVL), and 178 to 198 (FFAF…VHLL). The heme b site is built by His-83 and His-97. Residues His-182 and His-196 each contribute to the heme b site. Residue His-201 coordinates a ubiquinone. The next 4 helical transmembrane spans lie at 226–246 (TKDL…ALFF), 288–308 (LGGV…PLLN), 320–340 (ITQV…WIGG), and 347–367 (FTMI…ILIP).

This sequence belongs to the cytochrome b family. As to quaternary structure, the cytochrome bc1 complex contains 11 subunits: 3 respiratory subunits (MT-CYB, CYC1 and UQCRFS1), 2 core proteins (UQCRC1 and UQCRC2) and 6 low-molecular weight proteins (UQCRH/QCR6, UQCRB/QCR7, UQCRQ/QCR8, UQCR10/QCR9, UQCR11/QCR10 and a cleavage product of UQCRFS1). This cytochrome bc1 complex then forms a dimer. Requires heme b as cofactor.

It is found in the mitochondrion inner membrane. Functionally, component of the ubiquinol-cytochrome c reductase complex (complex III or cytochrome b-c1 complex) that is part of the mitochondrial respiratory chain. The b-c1 complex mediates electron transfer from ubiquinol to cytochrome c. Contributes to the generation of a proton gradient across the mitochondrial membrane that is then used for ATP synthesis. The chain is Cytochrome b (MT-CYB) from Akodon spegazzinii (Spegazzini's grass mouse).